The primary structure comprises 342 residues: Methionyl-tRNA formyltransferase (342 aa).

A (6S)-5,6,7,8-tetrahydrofolate-binding site is contributed by 108 to 111 (SLLP).

The protein belongs to the Fmt family.

The catalysed reaction is L-methionyl-tRNA(fMet) + (6R)-10-formyltetrahydrofolate = N-formyl-L-methionyl-tRNA(fMet) + (6S)-5,6,7,8-tetrahydrofolate + H(+). Attaches a formyl group to the free amino group of methionyl-tRNA(fMet). The formyl group appears to play a dual role in the initiator identity of N-formylmethionyl-tRNA by promoting its recognition by IF2 and preventing the misappropriation of this tRNA by the elongation apparatus. In Prochlorococcus marinus (strain MIT 9313), this protein is Methionyl-tRNA formyltransferase.